We begin with the raw amino-acid sequence, 318 residues long: DNA-directed RNA polymerase subunit alpha 2 (318 aa).

The tract at residues 1–227 (MALENLLHPT…NQLRNILDIE (227 aa)) is alpha N-terminal domain (alpha-NTD). The tract at residues 242–318 (INPILLKHVE…TLIENWPQDL (77 aa)) is alpha C-terminal domain (alpha-CTD).

This sequence belongs to the RNA polymerase alpha chain family. In terms of assembly, homodimer. The RNAP catalytic core consists of 2 alpha, 1 beta, 1 beta' and 1 omega subunit. When a sigma factor is associated with the core the holoenzyme is formed, which can initiate transcription.

It catalyses the reaction RNA(n) + a ribonucleoside 5'-triphosphate = RNA(n+1) + diphosphate. Functionally, DNA-dependent RNA polymerase catalyzes the transcription of DNA into RNA using the four ribonucleoside triphosphates as substrates. This chain is DNA-directed RNA polymerase subunit alpha 2, found in Francisella tularensis subsp. tularensis (strain FSC 198).